A 317-amino-acid polypeptide reads, in one-letter code: tRNA dimethylallyltransferase (317 aa).

Residue Gly-14–Ser-21 participates in ATP binding. Thr-16 to Ser-21 is a binding site for substrate. Interaction with substrate tRNA stretches follow at residues Asp-39–Leu-42 and Gln-163–Arg-167.

The protein belongs to the IPP transferase family. In terms of assembly, monomer. Requires Mg(2+) as cofactor.

The catalysed reaction is adenosine(37) in tRNA + dimethylallyl diphosphate = N(6)-dimethylallyladenosine(37) in tRNA + diphosphate. Functionally, catalyzes the transfer of a dimethylallyl group onto the adenine at position 37 in tRNAs that read codons beginning with uridine, leading to the formation of N6-(dimethylallyl)adenosine (i(6)A). The polypeptide is tRNA dimethylallyltransferase (Xylella fastidiosa (strain M23)).